The following is a 141-amino-acid chain: Cystatin (141 aa).

The signal sequence occupies residues 1–26 (MVHSQLPVAGPLRLLCALLLLPSATM). Positions 29 to 129 (GGLSPRSVTD…CRFQVWSRPW (101 aa)) constitute a Cystatin domain. The Secondary area of contact motif lies at 73-77 (QVVSG). 2 disulfides stabilise this stretch: C91–C107 and C120–C140.

Belongs to the cystatin family. In terms of tissue distribution, expressed at a low level by the venom gland (at protein level).

Its subcellular location is the secreted. Its function is as follows. Inhibits various C1 cysteine proteases including cathepsin L, papain and cathepsin B. This protein has no toxic activity and its function in the venom is unknown. It may play a role as a housekeeping or regulatory protein. In Pseudechis porphyriacus (Red-bellied black snake), this protein is Cystatin.